The sequence spans 315 residues: Putative glycosyltransferase ORF315 (315 aa).

Belongs to the glycosyltransferase group 1 family. Glycosyltransferase 4 subfamily.

This chain is Putative glycosyltransferase ORF315, found in Acidianus convivator (ABV).